Reading from the N-terminus, the 236-residue chain is Dual specificity protein phosphatase 15 (236 aa).

The N-myristoyl glycine moiety is linked to residue glycine 2. Positions 4–144 (GMTKVLPGLY…LEEFGWANSQ (141 aa)) constitute a Tyrosine-protein phosphatase domain. The active-site Phosphocysteine intermediate is cysteine 88. The disordered stretch occupies residues 178 to 213 (GPGTSAPSATTASSAASEGTLQRLVPRSPRESHRPL). A compositionally biased stretch (low complexity) spans 181–194 (TSAPSATTASSAAS).

It belongs to the protein-tyrosine phosphatase family. Non-receptor class dual specificity subfamily.

The protein localises to the cell membrane. The catalysed reaction is O-phospho-L-tyrosyl-[protein] + H2O = L-tyrosyl-[protein] + phosphate. It catalyses the reaction O-phospho-L-seryl-[protein] + H2O = L-seryl-[protein] + phosphate. It carries out the reaction O-phospho-L-threonyl-[protein] + H2O = L-threonyl-[protein] + phosphate. In terms of biological role, may play a role in the regulation of oligodendrocyte differentiation. May play a role in the regulation of myelin formation. Involved in the regulation of Erk1/2 phosphorylation in Schwann cells; the signaling may be linked to the regulation of myelination. May dephosphorylate MAPK13, ATF2, ERBB3, PDGFRB and SNX6. This Rattus norvegicus (Rat) protein is Dual specificity protein phosphatase 15 (Dusp15).